Consider the following 245-residue polypeptide: Ribonuclease PH (245 aa).

Phosphate is bound by residues Arg-86 and 124–126 (GTR).

Belongs to the RNase PH family. As to quaternary structure, homohexameric ring arranged as a trimer of dimers.

The enzyme catalyses tRNA(n+1) + phosphate = tRNA(n) + a ribonucleoside 5'-diphosphate. Functionally, phosphorolytic 3'-5' exoribonuclease that plays an important role in tRNA 3'-end maturation. Removes nucleotide residues following the 3'-CCA terminus of tRNAs; can also add nucleotides to the ends of RNA molecules by using nucleoside diphosphates as substrates, but this may not be physiologically important. Probably plays a role in initiation of 16S rRNA degradation (leading to ribosome degradation) during starvation. This is Ribonuclease PH from Bacillus cereus (strain ATCC 10987 / NRS 248).